Here is a 646-residue protein sequence, read N- to C-terminus: UvrABC system protein C (646 aa).

Residues 16 to 95 form the GIY-YIG domain; that stretch reads VEPGVYRFRD…IKEFDPRFNV (80 aa). The 36-residue stretch at 208–243 folds into the UVR domain; that stretch reads DRFARALEQQMNAAAEQLDFERAARLRDDLSALKRA.

The protein belongs to the UvrC family. In terms of assembly, interacts with UvrB in an incision complex.

It localises to the cytoplasm. Functionally, the UvrABC repair system catalyzes the recognition and processing of DNA lesions. UvrC both incises the 5' and 3' sides of the lesion. The N-terminal half is responsible for the 3' incision and the C-terminal half is responsible for the 5' incision. The sequence is that of UvrABC system protein C from Mycobacterium bovis (strain BCG / Pasteur 1173P2).